The sequence spans 26 residues: Alpha-amylase inhibitor 1 (26 aa).

It belongs to the protease inhibitor I6 (cereal trypsin/alpha-amylase inhibitor) family.

The protein resides in the secreted. In terms of biological role, alpha-amylase inhibitor. The sequence is that of Alpha-amylase inhibitor 1 from Saussurea costus (Costus).